Here is a 161-residue protein sequence, read N- to C-terminus: MSEELLKLLKAEGLDLLSCMHCGICTGSCPSGRHTGLNTRRIIRDARKNRAAVLSDYDLWLCTTCYTCQERCPRGIPITDAILELRRLAVREGLMLPEHRFVSEMVLECGHAVPLDEETKKKREELGLDPIPETVQKDPEALEGLKTLLKTCKFDELVAKK.

4Fe-4S ferredoxin-type domains follow at residues 10 to 40 (KAEG…LNTR) and 51 to 82 (AAVL…TDAI). The [4Fe-4S] cluster site is built by cysteine 19, cysteine 22, cysteine 25, cysteine 29, cysteine 62, cysteine 65, cysteine 68, and cysteine 72.

The protein belongs to the HdrC family. In terms of assembly, the ferredoxin/F(420)H(2)-dependent CoB-CoM heterodisulfide reductase is composed of three subunits; HdrA2, HdrB2 and HdrC2. Requires [4Fe-4S] cluster as cofactor.

It is found in the cytoplasm. It carries out the reaction coenzyme B + coenzyme M + 2 oxidized [2Fe-2S]-[ferredoxin] = coenzyme M-coenzyme B heterodisulfide + 2 reduced [2Fe-2S]-[ferredoxin] + 2 H(+). The enzyme catalyses coenzyme B + 2 oxidized coenzyme F420-(gamma-L-Glu)(n) + coenzyme M + 2 reduced [2Fe-2S]-[ferredoxin] + 4 H(+) = coenzyme M-coenzyme B heterodisulfide + 2 reduced coenzyme F420-(gamma-L-Glu)(n) + 2 oxidized [2Fe-2S]-[ferredoxin]. It functions in the pathway cofactor metabolism; coenzyme M-coenzyme B heterodisulfide reduction; coenzyme B and coenzyme M from coenzyme M-coenzyme B heterodisulfide: step 1/1. Part of a complex that catalyzes the reversible reduction of CoM-S-S-CoB to the thiol-coenzymes H-S-CoM (coenzyme M) and H-S-CoB (coenzyme B). Catalyzes the transfer of electrons from ferredoxin to CoM-S-S-CoB during methanogenesis from acetate. Electrons transfer from ferredoxin to CoM-S-S-CoB via HdrA2, HdrC2 and HdrB2. In addition, the complex can use electron bifurcation to direct electron pairs from reduced coenzyme F420 towards the reduction of both ferredoxin and CoB-CoM heterodisulfide. This activity may take place during Fe(III)-dependent anaerobic methane oxidation. The chain is Ferredoxin/F(420)H(2)-dependent CoB-CoM heterodisulfide reductase subunit C from Methanosarcina acetivorans (strain ATCC 35395 / DSM 2834 / JCM 12185 / C2A).